Reading from the N-terminus, the 235-residue chain is Glycerol-3-phosphate acyltransferase (235 aa).

6 helical membrane passes run 2–22 (FTLIVILAVSYLIGSIPTSII), 56–76 (TVTILDIVKGAIAAISVVVFF), 94–114 (LIAGLSAVFGHVFTVFAGFKG), 126–146 (FGIAPVTTLIVLGVFLLVVFL), 152–172 (VASILAAIAFPVIIAVRKYLF), and 190–210 (FIHDSLDYHLLIFGFIVAAAI).

This sequence belongs to the PlsY family. As to quaternary structure, probably interacts with PlsX.

It localises to the cell inner membrane. It carries out the reaction an acyl phosphate + sn-glycerol 3-phosphate = a 1-acyl-sn-glycero-3-phosphate + phosphate. It functions in the pathway lipid metabolism; phospholipid metabolism. Functionally, catalyzes the transfer of an acyl group from acyl-phosphate (acyl-PO(4)) to glycerol-3-phosphate (G3P) to form lysophosphatidic acid (LPA). This enzyme utilizes acyl-phosphate as fatty acyl donor, but not acyl-CoA or acyl-ACP. The polypeptide is Glycerol-3-phosphate acyltransferase (Chlorobium phaeobacteroides (strain BS1)).